A 509-amino-acid polypeptide reads, in one-letter code: Tyrosine-protein kinase STK (509 aa).

Residues 1 to 16 are compositionally biased toward polar residues; that stretch reads MGPCCSKQTKALNNQP. The interval 1–23 is disordered; that stretch reads MGPCCSKQTKALNNQPDKSKSKD. Residue glycine 2 is the site of N-myristoyl glycine attachment. In terms of domain architecture, SH3 spans 59–120; sequence PGVTIFVALY…PSTYVAPEKS (62 aa). Residues 126–218 form the SH2 domain; the sequence is WYFGDVKRAE…GLVCALTLPC (93 aa). The Protein kinase domain occupies 240–495; the sequence is LRLNRKLGAG…LQGVLEDYFV (256 aa). Residues 246–254 and lysine 268 contribute to the ATP site; that span reads LGAGQFGEV. The active-site Proton acceptor is aspartate 360. Phosphotyrosine; by autocatalysis is present on tyrosine 390.

This sequence belongs to the protein kinase superfamily. Tyr protein kinase family. SRC subfamily.

It catalyses the reaction L-tyrosyl-[protein] + ATP = O-phospho-L-tyrosyl-[protein] + ADP + H(+). This is Tyrosine-protein kinase STK (STK) from Hydra vulgaris (Hydra).